A 212-amino-acid polypeptide reads, in one-letter code: tRNA (guanine-N(7)-)-methyltransferase (212 aa).

S-adenosyl-L-methionine-binding residues include E44, D69, D96, and D118. D118 is an active-site residue. K122 provides a ligand contact to substrate. The tract at residues 124-129 is interaction with RNA; it reads RHEKRR. Substrate contacts are provided by residues D154 and 191 to 194; that span reads TEYE.

It belongs to the class I-like SAM-binding methyltransferase superfamily. TrmB family.

It catalyses the reaction guanosine(46) in tRNA + S-adenosyl-L-methionine = N(7)-methylguanosine(46) in tRNA + S-adenosyl-L-homocysteine. It participates in tRNA modification; N(7)-methylguanine-tRNA biosynthesis. Its function is as follows. Catalyzes the formation of N(7)-methylguanine at position 46 (m7G46) in tRNA. This chain is tRNA (guanine-N(7)-)-methyltransferase, found in Streptococcus gordonii (strain Challis / ATCC 35105 / BCRC 15272 / CH1 / DL1 / V288).